The following is a 356-amino-acid chain: uncharacterized protein (356 aa).

NADP(+) is bound at residue 37-44 (TGASSGIG). A substrate-binding site is contributed by serine 168. The active-site Proton acceptor is the tyrosine 181.

It belongs to the short-chain dehydrogenases/reductases (SDR) family.

This is an uncharacterized protein from Bacillus subtilis (strain 168).